Reading from the N-terminus, the 225-residue chain is Thymidylate kinase (225 aa).

10 to 17 (GGEGAGKT) contacts ATP.

Belongs to the thymidylate kinase family.

It carries out the reaction dTMP + ATP = dTDP + ADP. Its function is as follows. Phosphorylation of dTMP to form dTDP in both de novo and salvage pathways of dTTP synthesis. The chain is Thymidylate kinase from Oceanobacillus iheyensis (strain DSM 14371 / CIP 107618 / JCM 11309 / KCTC 3954 / HTE831).